Reading from the N-terminus, the 146-residue chain is Stress-responsive DNAJB4-interacting membrane protein 1 (146 aa).

Residues 1–26 (MWPAPCSVGRLLIFFMCSSSGYVVQG) form the signal peptide. Residues 27–66 (CGPSPGARTTLGSPLSLWSIKTPSHIFCTRRAINLGFPSP) are Extracellular-facing. Residues 67 to 87 (PLVQLIFWSLNAGLDLYLCLI) traverse the membrane as a helical segment. At 88 to 94 (SSCGFSQ) the chain is on the cytoplasmic side. Residues 95 to 115 (VFWPVEAFCSFSLSFFALALS) form a helical membrane-spanning segment. The Extracellular portion of the chain corresponds to 116 to 146 (HKFVICRLDQHIFSGFTKSLKNLPPCHRTDI).

In terms of assembly, homodimer. Interacts with DNAJB4. Expressed in brain with higher detection in neurons than astrocytes. Decreased expression in Alzheimer brains. Detected at protein level in brain and cervix.

Its subcellular location is the membrane. Functionally, promotes neuronal cells survival to stress conditions. The polypeptide is Stress-responsive DNAJB4-interacting membrane protein 1 (SDIM1) (Homo sapiens (Human)).